A 442-amino-acid polypeptide reads, in one-letter code: UPF0489 protein C5orf22 (442 aa).

The segment at 175-210 (SSAKKPKLALEDSENTASTNCDSSSEGLEKDTATQR) is disordered. Over residues 189–200 (NTASTNCDSSSE) the composition is skewed to polar residues.

The protein belongs to the UPF0489 family.

The chain is UPF0489 protein C5orf22 (C5orf22) from Homo sapiens (Human).